A 218-amino-acid chain; its full sequence is Eukaryotic translation initiation factor 3 subunit K (218 aa).

Ala-2 is modified (N-acetylalanine). A Phosphothreonine modification is found at Thr-28. The PCI domain maps to 42 to 204 (YDLEANLAVL…SIKPKNIVEK (163 aa)). A Phosphoserine modification is found at Ser-217.

The protein belongs to the eIF-3 subunit K family. As to quaternary structure, component of the eukaryotic translation initiation factor 3 (eIF-3) complex, which is composed of 13 subunits: EIF3A, EIF3B, EIF3C, EIF3D, EIF3E, EIF3F, EIF3G, EIF3H, EIF3I, EIF3J, EIF3K, EIF3L and EIF3M. The eIF-3 complex appears to include 3 stable modules: module A is composed of EIF3A, EIF3B, EIF3G and EIF3I; module B is composed of EIF3F, EIF3H, and EIF3M; and module C is composed of EIF3C, EIF3D, EIF3E, EIF3K and EIF3L. EIF3C of module C binds EIF3B of module A and EIF3H of module B, thereby linking the three modules. EIF3J is a labile subunit that binds to the eIF-3 complex via EIF3B. The eIF-3 complex interacts with RPS6KB1 under conditions of nutrient depletion. Mitogenic stimulation leads to binding and activation of a complex composed of MTOR and RPTOR, leading to phosphorylation and release of RPS6KB1 and binding of EIF4B to eIF-3. Interacts with CCND3, but not with CCND1 and CCND2.

It localises to the nucleus. The protein localises to the cytoplasm. Its function is as follows. Component of the eukaryotic translation initiation factor 3 (eIF-3) complex, which is required for several steps in the initiation of protein synthesis. The eIF-3 complex associates with the 40S ribosome and facilitates the recruitment of eIF-1, eIF-1A, eIF-2:GTP:methionyl-tRNAi and eIF-5 to form the 43S pre-initiation complex (43S PIC). The eIF-3 complex stimulates mRNA recruitment to the 43S PIC and scanning of the mRNA for AUG recognition. The eIF-3 complex is also required for disassembly and recycling of post-termination ribosomal complexes and subsequently prevents premature joining of the 40S and 60S ribosomal subunits prior to initiation. The eIF-3 complex specifically targets and initiates translation of a subset of mRNAs involved in cell proliferation, including cell cycling, differentiation and apoptosis, and uses different modes of RNA stem-loop binding to exert either translational activation or repression. The chain is Eukaryotic translation initiation factor 3 subunit K from Bos taurus (Bovine).